Consider the following 232-residue polypeptide: Cell surface superoxide dismutase [Cu-Zn] 4 (232 aa).

A signal peptide spans 1–15; sequence MKYLSIISIVALALA. N53 carries N-linked (GlcNAc...) asparagine glycosylation. 2 residues coordinate Cu cation: H75 and H77. Residue N86 is glycosylated (N-linked (GlcNAc...) asparagine). Cu cation is bound at residue H93. Zn(2+) is bound at residue H93. An N-linked (GlcNAc...) asparagine glycan is attached at N98. D113 contacts Zn(2+). A glycan (N-linked (GlcNAc...) asparagine) is linked at N120. A Cu cation-binding site is contributed by H153. N156, N164, N182, N193, and N196 each carry an N-linked (GlcNAc...) asparagine glycan. The segment covering 174–208 has biased composition (low complexity); sequence TASAATWSNSSSSSSSSSKNSTNGSSGSSTSASQG. The segment at 174–211 is disordered; the sequence is TASAATWSNSSSSSSSSSKNSTNGSSGSSTSASQGSGA. S209 carries the GPI-anchor amidated serine lipid modification. A propeptide spans 210-232 (removed in mature form); it reads GAGRAEISGFLAAGIAGVVAALI. Position 213 (R213) interacts with substrate.

This sequence belongs to the Cu-Zn superoxide dismutase family. It depends on Cu cation as a cofactor. Zn(2+) is required as a cofactor. Post-translationally, the GPI-anchor is attached to the protein in the endoplasmic reticulum and serves to target the protein to the cell surface. There, the glucosamine-inositol phospholipid moiety is cleaved off and the GPI-modified mannoprotein is covalently attached via its lipidless GPI glycan remnant to the 1,6-beta-glucan of the outer cell wall layer.

It is found in the secreted. The protein localises to the cell wall. The protein resides in the membrane. It catalyses the reaction 2 superoxide + 2 H(+) = H2O2 + O2. Its function is as follows. Superoxide dismutases serve to convert damaging superoxide radicals, a key form of ROS, to less damaging hydrogen peroxide that can be converted into water by catalase action. Degrades host-derived reactive oxygen species to escape innate immune surveillance. Involved in the occurrence of miconazole-tolerant persisters in biofilms. Persisters are cells that survive high doses of an antimicrobial agent. The sequence is that of Cell surface superoxide dismutase [Cu-Zn] 4 (SOD4) from Candida albicans (strain SC5314 / ATCC MYA-2876) (Yeast).